A 623-amino-acid chain; its full sequence is Putative disease resistance protein At5g47280 (623 aa).

NB-ARC domains are found at residues 2–51 (LFNL…VSQS) and 119–249 (VDPR…NMLV). 16 to 23 (GMIGSGKT) provides a ligand contact to ATP. LRR repeat units follow at residues 488–511 (SLNSISITNCPNIKELPKNISKLQ), 512–534 (ALQLLRLYACPELKSLPVEICEL), 536–558 (RLVYVDISHCLSLSSLPEKIGNV), and 560–581 (TLEKIDMRECSLSSIPSSAVSL).

Belongs to the disease resistance NB-LRR family.

Its function is as follows. Potential disease resistance protein. This chain is Putative disease resistance protein At5g47280, found in Arabidopsis thaliana (Mouse-ear cress).